Here is a 155-residue protein sequence, read N- to C-terminus: MAMPHPLECCCPQCLPSSESFPIYGEQEIPCSETQAETTPVEKTVRANVLTDILDDHYYAILASLFIIALWLLYIYLSSIPTETGPYFYQDLNSVKIYGIGATNPEVIAAIHHWQKYPFGESPMWGGLISVLSILLKPLTLVFALSFFLLLSSKR.

Over 1–59 the chain is Cytoplasmic; the sequence is MAMPHPLECCCPQCLPSSESFPIYGEQEIPCSETQAETTPVEKTVRANVLTDILDDHYY. The helical transmembrane segment at 60-80 threads the bilayer; it reads AILASLFIIALWLLYIYLSSI. At 81–130 the chain is on the lumenal side; that stretch reads PTETGPYFYQDLNSVKIYGIGATNPEVIAAIHHWQKYPFGESPMWGGLIS. An Involved in plasmodesmata targeting and virus cell-to-cell movement motif is present at residues 89 to 93; sequence YQDLN. Residues 131–151 form a helical membrane-spanning segment; it reads VLSILLKPLTLVFALSFFLLL. A required for attachment to the host plasmodesmata-associated membrane compartments region spans residues 150–155; that stretch reads LLSSKR. The Cytoplasmic segment spans residues 152 to 155; the sequence is SSKR.

This sequence belongs to the virgaviridae TGB3 movement protein family. Interacts with movement proteins TGB1 and TGB2. TGB1-TGB3-TGB2 complex formation is enhanced by ATP hydrolysis.

The protein localises to the host cell junction. It is found in the host plasmodesma. The protein resides in the host endoplasmic reticulum membrane. Its subcellular location is the host cytoplasm. It localises to the host cytoskeleton. In terms of biological role, participates in the transport of viral genome to neighboring plant cells directly through plasmodesmata, without any budding. TGBp2 and TGBp3 are necessary for intracellular delivery of TGBp1-containing vRNPs to plasmodesmata. Can gate plasmodesmata and increase their size exclusion limit. Induces host actin cytoskeleton network thickening, which probably plays a major role in virus cell-to-cell movement. This chain is Movement protein TGB3, found in Hordeum vulgare (Barley).